The primary structure comprises 233 residues: Large ribosomal subunit protein uL1 (233 aa).

The protein belongs to the universal ribosomal protein uL1 family. As to quaternary structure, part of the 50S ribosomal subunit.

Binds directly to 23S rRNA. The L1 stalk is quite mobile in the ribosome, and is involved in E site tRNA release. In terms of biological role, protein L1 is also a translational repressor protein, it controls the translation of the L11 operon by binding to its mRNA. This is Large ribosomal subunit protein uL1 from Novosphingobium aromaticivorans (strain ATCC 700278 / DSM 12444 / CCUG 56034 / CIP 105152 / NBRC 16084 / F199).